We begin with the raw amino-acid sequence, 166 residues long: Ribosome maturation factor RimM (166 aa).

One can recognise a PRC barrel domain in the interval 94–166 (EGEYYLGKLI…IELKVLDLLK (73 aa)).

Belongs to the RimM family. In terms of assembly, binds ribosomal protein uS19.

It localises to the cytoplasm. In terms of biological role, an accessory protein needed during the final step in the assembly of 30S ribosomal subunit, possibly for assembly of the head region. Essential for efficient processing of 16S rRNA. May be needed both before and after RbfA during the maturation of 16S rRNA. It has affinity for free ribosomal 30S subunits but not for 70S ribosomes. This Borreliella burgdorferi (strain ATCC 35210 / DSM 4680 / CIP 102532 / B31) (Borrelia burgdorferi) protein is Ribosome maturation factor RimM.